The chain runs to 350 residues: LysM domain-containing GPI-anchored protein 2 (350 aa).

An N-terminal signal peptide occupies residues 1-23 (METSCFTLLGLLVSLSFFLTLSA). 4 N-linked (GlcNAc...) asparagine glycosylation sites follow: asparagine 30, asparagine 48, asparagine 76, and asparagine 99. 4 disulfides stabilise this stretch: cysteine 31–cysteine 97, cysteine 38–cysteine 161, cysteine 95–cysteine 159, and cysteine 97–cysteine 161. 2 consecutive LysM domains span residues 108-155 (IEYT…KFWI) and 172-216 (YAHV…PLDV). Residues 114–120 (KDDILSF) and 142–149 (PDPNKIEI) contribute to the chitin site. Residues asparagine 193, asparagine 238, asparagine 258, asparagine 289, and asparagine 305 are each glycosylated (N-linked (GlcNAc...) asparagine). Intrachain disulfides connect cysteine 221–cysteine 253 and cysteine 248–cysteine 277. A lipid anchor (GPI-anchor amidated aspartate) is attached at aspartate 318. Residues 319–350 (SAGPDNYASTLSSSFNFVIVLIQCALLCLCLL) constitute a propeptide, removed in mature form.

As to quaternary structure, forms homooligomers. Interacts with CERK1. Binds to chitin oligosaccharide elicitor.

Its subcellular location is the cell membrane. In terms of biological role, chitin elicitor-binding protein involved in the perception of chitin oligosaccharide elicitor. The chain is LysM domain-containing GPI-anchored protein 2 (LYM2) from Arabidopsis thaliana (Mouse-ear cress).